Here is a 157-residue protein sequence, read N- to C-terminus: Ribosomal RNA large subunit methyltransferase H (157 aa).

Residues Leu73, Gly105, and 124 to 129 each bind S-adenosyl-L-methionine; that span reads LSKMTF.

It belongs to the RNA methyltransferase RlmH family. In terms of assembly, homodimer.

It is found in the cytoplasm. It catalyses the reaction pseudouridine(1915) in 23S rRNA + S-adenosyl-L-methionine = N(3)-methylpseudouridine(1915) in 23S rRNA + S-adenosyl-L-homocysteine + H(+). Its function is as follows. Specifically methylates the pseudouridine at position 1915 (m3Psi1915) in 23S rRNA. In Phocaeicola vulgatus (strain ATCC 8482 / DSM 1447 / JCM 5826 / CCUG 4940 / NBRC 14291 / NCTC 11154) (Bacteroides vulgatus), this protein is Ribosomal RNA large subunit methyltransferase H.